The chain runs to 212 residues: Thymidylate kinase (212 aa).

Residue 10–17 coordinates ATP; that stretch reads GIDGCGKT.

This sequence belongs to the thymidylate kinase family.

The catalysed reaction is dTMP + ATP = dTDP + ADP. In terms of biological role, phosphorylation of dTMP to form dTDP in both de novo and salvage pathways of dTTP synthesis. The protein is Thymidylate kinase of Prochlorococcus marinus (strain MIT 9301).